A 309-amino-acid chain; its full sequence is Movement protein (309 aa).

The interval H245 to A273 is disordered. Residues L246 to A262 are compositionally biased toward polar residues.

It is found in the host cell junction. The protein localises to the host plasmodesma. Transports viral genome to neighboring plant cells directly through plasmosdesmata, without any budding. The movement protein allows efficient cell to cell propagation, by bypassing the host cell wall barrier. Acts by forming a tubular structure at the host plasmodesmata, enlarging it enough to allow free passage of virion capsids. The protein is Movement protein of Solanum lycopersicum (Tomato).